The following is a 189-amino-acid chain: Glutathione-dependent formaldehyde-activating enzyme (189 aa).

The region spanning 20–167 (FAGGTLVCKC…LKELGLEPYD (148 aa)) is the CENP-V/GFA domain. The Zn(2+) site is built by cysteine 27, cysteine 29, cysteine 48, cysteine 50, cysteine 53, cysteine 95, and cysteine 98.

The protein belongs to the Gfa family. Requires Zn(2+) as cofactor.

It carries out the reaction S-(hydroxymethyl)glutathione = glutathione + formaldehyde. Its pathway is one-carbon metabolism; formaldehyde degradation; formate from formaldehyde (glutathione route): step 1/3. Its function is as follows. Catalyzes the condensation of formaldehyde and glutathione to S-hydroxymethylglutathione. This is Glutathione-dependent formaldehyde-activating enzyme from Rhodopseudomonas palustris (strain BisA53).